We begin with the raw amino-acid sequence, 417 residues long: Serine hydroxymethyltransferase (417 aa).

Residues Leu-121 and 125-127 (GHL) each bind (6S)-5,6,7,8-tetrahydrofolate. At Lys-229 the chain carries N6-(pyridoxal phosphate)lysine. 355–357 (SPF) serves as a coordination point for (6S)-5,6,7,8-tetrahydrofolate.

It belongs to the SHMT family. In terms of assembly, homodimer. Requires pyridoxal 5'-phosphate as cofactor.

It localises to the cytoplasm. The enzyme catalyses (6R)-5,10-methylene-5,6,7,8-tetrahydrofolate + glycine + H2O = (6S)-5,6,7,8-tetrahydrofolate + L-serine. It participates in one-carbon metabolism; tetrahydrofolate interconversion. The protein operates within amino-acid biosynthesis; glycine biosynthesis; glycine from L-serine: step 1/1. Functionally, catalyzes the reversible interconversion of serine and glycine with tetrahydrofolate (THF) serving as the one-carbon carrier. This reaction serves as the major source of one-carbon groups required for the biosynthesis of purines, thymidylate, methionine, and other important biomolecules. Also exhibits THF-independent aldolase activity toward beta-hydroxyamino acids, producing glycine and aldehydes, via a retro-aldol mechanism. This is Serine hydroxymethyltransferase from Edwardsiella ictaluri (strain 93-146).